A 258-amino-acid chain; its full sequence is UPF0246 protein YaaA (258 aa).

The protein belongs to the UPF0246 family.

The polypeptide is UPF0246 protein YaaA (Escherichia coli (strain SE11)).